Here is a 239-residue protein sequence, read N- to C-terminus: tRNA (guanine-N(7)-)-methyltransferase (239 aa).

Residues E69, E94, D121, and D144 each contribute to the S-adenosyl-L-methionine site. D144 is a catalytic residue. Residue K148 participates in substrate binding. The segment at 150–155 is interaction with RNA; the sequence is RHNKRR. Substrate-binding positions include D180 and 217 to 220; that span reads TKFE.

It belongs to the class I-like SAM-binding methyltransferase superfamily. TrmB family. In terms of assembly, monomer.

It carries out the reaction guanosine(46) in tRNA + S-adenosyl-L-methionine = N(7)-methylguanosine(46) in tRNA + S-adenosyl-L-homocysteine. The protein operates within tRNA modification; N(7)-methylguanine-tRNA biosynthesis. Catalyzes the formation of N(7)-methylguanine at position 46 (m7G46) in tRNA. The chain is tRNA (guanine-N(7)-)-methyltransferase from Salmonella typhimurium (strain LT2 / SGSC1412 / ATCC 700720).